The primary structure comprises 267 residues: Tryptophan synthase alpha chain (267 aa).

Catalysis depends on proton acceptor residues E44 and D55.

It belongs to the TrpA family. Tetramer of two alpha and two beta chains.

The catalysed reaction is (1S,2R)-1-C-(indol-3-yl)glycerol 3-phosphate + L-serine = D-glyceraldehyde 3-phosphate + L-tryptophan + H2O. It participates in amino-acid biosynthesis; L-tryptophan biosynthesis; L-tryptophan from chorismate: step 5/5. Functionally, the alpha subunit is responsible for the aldol cleavage of indoleglycerol phosphate to indole and glyceraldehyde 3-phosphate. The sequence is that of Tryptophan synthase alpha chain from Coxiella burnetii (strain Dugway 5J108-111).